Here is a 340-residue protein sequence, read N- to C-terminus: L-threonine 3-dehydrogenase (340 aa).

Residue cysteine 38 coordinates Zn(2+). Residues threonine 40 and histidine 43 each act as charge relay system in the active site. Zn(2+) is bound by residues histidine 63, glutamate 64, cysteine 93, cysteine 96, cysteine 99, and cysteine 107. Residues isoleucine 175, aspartate 195, arginine 200, 261–263, and 285–286 each bind NAD(+); these read LGI and IY.

This sequence belongs to the zinc-containing alcohol dehydrogenase family. In terms of assembly, homotetramer. Zn(2+) serves as cofactor.

The protein localises to the cytoplasm. It carries out the reaction L-threonine + NAD(+) = (2S)-2-amino-3-oxobutanoate + NADH + H(+). It participates in amino-acid degradation; L-threonine degradation via oxydo-reductase pathway; glycine from L-threonine: step 1/2. Functionally, catalyzes the NAD(+)-dependent oxidation of L-threonine to 2-amino-3-ketobutyrate. This is L-threonine 3-dehydrogenase from Xanthomonas oryzae pv. oryzae (strain MAFF 311018).